The following is a 317-amino-acid chain: Putative ribosomal protein uL10-like (317 aa).

A Phosphotyrosine modification is found at Tyr24. A Phosphothreonine modification is found at Thr59. The interval 292 to 317 (AAAPAKVEAKEESEESDEDMGFGLFD) is disordered. Residue Lys297 forms a Glycyl lysine isopeptide (Lys-Gly) (interchain with G-Cter in SUMO1); alternate linkage. Residue Lys297 forms a Glycyl lysine isopeptide (Lys-Gly) (interchain with G-Cter in SUMO2); alternate linkage. Acidic residues predominate over residues 302–311 (EESEESDEDM). 2 positions are modified to phosphoserine: Ser304 and Ser307.

The protein belongs to the universal ribosomal protein uL10 family. P0 forms a pentameric complex by interaction with dimers of P1 and P2.

In terms of biological role, ribosomal protein P0 is the functional equivalent of E.coli protein L10. The protein is Putative ribosomal protein uL10-like (RPLP0P6) of Homo sapiens (Human).